The following is a 75-amino-acid chain: Putative membrane protein insertion efficiency factor (75 aa).

It belongs to the UPF0161 family.

The protein resides in the cell membrane. In terms of biological role, could be involved in insertion of integral membrane proteins into the membrane. The protein is Putative membrane protein insertion efficiency factor of Bacillus velezensis (strain DSM 23117 / BGSC 10A6 / LMG 26770 / FZB42) (Bacillus amyloliquefaciens subsp. plantarum).